The following is a 544-amino-acid chain: Chaperonin GroEL 1 (544 aa).

Residues 30 to 33, Lys-51, 87 to 91, Gly-415, and Asp-494 each bind ATP; these read TLGP and DGTTT.

Belongs to the chaperonin (HSP60) family. In terms of assembly, forms a cylinder of 14 subunits composed of two heptameric rings stacked back-to-back. Interacts with the co-chaperonin GroES.

It localises to the cytoplasm. It carries out the reaction ATP + H2O + a folded polypeptide = ADP + phosphate + an unfolded polypeptide.. In terms of biological role, together with its co-chaperonin GroES, plays an essential role in assisting protein folding. The GroEL-GroES system forms a nano-cage that allows encapsulation of the non-native substrate proteins and provides a physical environment optimized to promote and accelerate protein folding. This chain is Chaperonin GroEL 1, found in Syntrophus aciditrophicus (strain SB).